A 142-amino-acid polypeptide reads, in one-letter code: Hemoglobin subunit alpha (142 aa).

Serine 1 carries the N-acetylserine modification. Residues 1–142 (SLSDKDKAAV…LSLALAEKYR (142 aa)) enclose the Globin domain. Heme b contacts are provided by histidine 59 and histidine 88.

This sequence belongs to the globin family. Heterotetramer of two alpha chains and two beta chains. As to expression, red blood cells.

Involved in oxygen transport from gills to the various peripheral tissues. This is Hemoglobin subunit alpha from Lycodes reticulatus (Arctic eelpout).